Here is a 158-residue protein sequence, read N- to C-terminus: Transcription elongation factor GreA (158 aa).

Belongs to the GreA/GreB family.

In terms of biological role, necessary for efficient RNA polymerase transcription elongation past template-encoded arresting sites. The arresting sites in DNA have the property of trapping a certain fraction of elongating RNA polymerases that pass through, resulting in locked ternary complexes. Cleavage of the nascent transcript by cleavage factors such as GreA or GreB allows the resumption of elongation from the new 3'terminus. GreA releases sequences of 2 to 3 nucleotides. This Zymomonas mobilis subsp. mobilis (strain ATCC 31821 / ZM4 / CP4) protein is Transcription elongation factor GreA.